A 447-amino-acid chain; its full sequence is Cysteine--tRNA ligase (447 aa).

A Zn(2+)-binding site is contributed by Cys28. Positions 30–40 (PTVYNYIHIGN) match the 'HIGH' region motif. 3 residues coordinate Zn(2+): Cys211, His236, and Glu240. The short motif at 268–272 (KMSKS) is the 'KMSKS' region element. An ATP-binding site is contributed by Lys271.

This sequence belongs to the class-I aminoacyl-tRNA synthetase family. As to quaternary structure, monomer. Zn(2+) is required as a cofactor.

It is found in the cytoplasm. The catalysed reaction is tRNA(Cys) + L-cysteine + ATP = L-cysteinyl-tRNA(Cys) + AMP + diphosphate. This Streptococcus agalactiae serotype V (strain ATCC BAA-611 / 2603 V/R) protein is Cysteine--tRNA ligase.